Consider the following 326-residue polypeptide: MSPATAPVLISCGEPAGIGPEIAVAAWDALQGTIPLAWVGDPRHLPASTTFTAITHPRAVADVPTGSLPVLVHDFAAPSTPGHPDPANAQGVIDVIAACVAWVQEGAAAALCTAPIHKKALIDGADFKHPGHTEYLQALAGGRSRAVMMLASDALRVVPTTIHIALEDVPRVLTPALLRETITITHAALQRQFGIQAPRIVVAGLNPHAGEGGAMGLEEQDWIADVISALAASGMNLRGPLPADTMFHARAREGYDAAIAMYHDQALIPIKTLDFDRGVNVTLGLPFIRTSPDHGTAFDIAGKGIANPTSMIEAIKLAAHMAARHV.

Substrate-binding residues include histidine 132 and threonine 133. 3 residues coordinate a divalent metal cation: histidine 163, histidine 208, and histidine 263. Substrate-binding residues include lysine 271, asparagine 280, and arginine 289.

The protein belongs to the PdxA family. Homodimer. Zn(2+) is required as a cofactor. Mg(2+) serves as cofactor. It depends on Co(2+) as a cofactor.

The protein resides in the cytoplasm. It catalyses the reaction 4-(phosphooxy)-L-threonine + NAD(+) = 3-amino-2-oxopropyl phosphate + CO2 + NADH. It functions in the pathway cofactor biosynthesis; pyridoxine 5'-phosphate biosynthesis; pyridoxine 5'-phosphate from D-erythrose 4-phosphate: step 4/5. Its function is as follows. Catalyzes the NAD(P)-dependent oxidation of 4-(phosphooxy)-L-threonine (HTP) into 2-amino-3-oxo-4-(phosphooxy)butyric acid which spontaneously decarboxylates to form 3-amino-2-oxopropyl phosphate (AHAP). This chain is 4-hydroxythreonine-4-phosphate dehydrogenase, found in Roseobacter denitrificans (strain ATCC 33942 / OCh 114) (Erythrobacter sp. (strain OCh 114)).